We begin with the raw amino-acid sequence, 289 residues long: NAC domain-containing protein 2 (289 aa).

An NAC domain is found at 7–158; that stretch reads LPPGFRFHPT…DWVLCRIYNK (152 aa).

As to quaternary structure, interacts with KIN10 and KIN11.

The protein localises to the nucleus. This is NAC domain-containing protein 2 (NAC002) from Arabidopsis thaliana (Mouse-ear cress).